The primary structure comprises 332 residues: MSVKEHLIHNVHKEEHGHAHNKITVVGVGAVGMACAISILMKDLADELALVDVVEDKLRGEMLDLQHGSLFLRTPKIVSGKDYSVTANSKLVIITAGARQQEGESRLNLVQRNVNIFKFIIPNVVKHSPDCKLLVVSNPVDILTYVAWKISGFPKHRVIGSGCNLDSARFRYLMGERLGIHPLSCHGWIVGEHGDSSVPVWSGVNVAGVSLKALHPELGTDADKEHWKEVHKEVVDSAYEVIKLKGYTSWAIGLSVADLAETVMKNLRRVHPISTMVKGMYGIKDDVFLSVPCVLGYHGITDVVMMTLKSEEEEKIRKSADTLWGIQKELQF.

Residues 29–57 (GAVG…VEDK) and arginine 99 contribute to the NAD(+) site. Substrate is bound by residues arginine 106, asparagine 138, and arginine 169. Asparagine 138 contacts NAD(+). Histidine 193 acts as the Proton acceptor in catalysis. Threonine 248 contacts substrate.

It belongs to the LDH/MDH superfamily. LDH family. In terms of assembly, homotetramer.

The protein resides in the cytoplasm. It catalyses the reaction (S)-lactate + NAD(+) = pyruvate + NADH + H(+). The protein operates within fermentation; pyruvate fermentation to lactate; (S)-lactate from pyruvate: step 1/1. Its function is as follows. Interconverts simultaneously and stereospecifically pyruvate and lactate with concomitant interconversion of NADH and NAD(+). The chain is L-lactate dehydrogenase A chain (LDHA) from Caiman crocodilus apaporiensis (Rio Apaporis caiman).